The sequence spans 186 residues: Ribosome-recycling factor (186 aa).

This sequence belongs to the RRF family.

It is found in the cytoplasm. In terms of biological role, responsible for the release of ribosomes from messenger RNA at the termination of protein biosynthesis. May increase the efficiency of translation by recycling ribosomes from one round of translation to another. In Bacteroides fragilis (strain ATCC 25285 / DSM 2151 / CCUG 4856 / JCM 11019 / LMG 10263 / NCTC 9343 / Onslow / VPI 2553 / EN-2), this protein is Ribosome-recycling factor.